The sequence spans 221 residues: N-(5'-phosphoribosyl)anthranilate isomerase (221 aa).

The protein belongs to the TrpF family.

The enzyme catalyses N-(5-phospho-beta-D-ribosyl)anthranilate = 1-(2-carboxyphenylamino)-1-deoxy-D-ribulose 5-phosphate. It participates in amino-acid biosynthesis; L-tryptophan biosynthesis; L-tryptophan from chorismate: step 3/5. This is N-(5'-phosphoribosyl)anthranilate isomerase from Chlorobaculum tepidum (strain ATCC 49652 / DSM 12025 / NBRC 103806 / TLS) (Chlorobium tepidum).